A 293-amino-acid chain; its full sequence is Pyridoxal 5'-phosphate synthase subunit PdxS (293 aa).

Aspartate 23 is a binding site for D-ribose 5-phosphate. Lysine 80 functions as the Schiff-base intermediate with D-ribose 5-phosphate in the catalytic mechanism. Residue glycine 152 participates in D-ribose 5-phosphate binding. Arginine 164 is a binding site for D-glyceraldehyde 3-phosphate. Residues glycine 213 and 234-235 contribute to the D-ribose 5-phosphate site; that span reads GS.

It belongs to the PdxS/SNZ family. In the presence of PdxT, forms a dodecamer of heterodimers.

It carries out the reaction aldehydo-D-ribose 5-phosphate + D-glyceraldehyde 3-phosphate + L-glutamine = pyridoxal 5'-phosphate + L-glutamate + phosphate + 3 H2O + H(+). It participates in cofactor biosynthesis; pyridoxal 5'-phosphate biosynthesis. In terms of biological role, catalyzes the formation of pyridoxal 5'-phosphate from ribose 5-phosphate (RBP), glyceraldehyde 3-phosphate (G3P) and ammonia. The ammonia is provided by the PdxT subunit. Can also use ribulose 5-phosphate and dihydroxyacetone phosphate as substrates, resulting from enzyme-catalyzed isomerization of RBP and G3P, respectively. The polypeptide is Pyridoxal 5'-phosphate synthase subunit PdxS (Dehalococcoides mccartyi (strain ATCC BAA-2266 / KCTC 15142 / 195) (Dehalococcoides ethenogenes (strain 195))).